Reading from the N-terminus, the 91-residue chain is Cytochrome b-c1 complex subunit 6, mitochondrial (91 aa).

A mitochondrion-targeting transit peptide spans Met1–Ser13. Positions Met1–Leu30 are disordered. Residues Gly14–Val27 are compositionally biased toward acidic residues. 2 disulfides stabilise this stretch: Cys37–Cys81 and Cys53–Cys67. An N6-acetyllysine modification is found at Lys42. Position 85 is an N6-acetyllysine (Lys85).

The protein belongs to the UQCRH/QCR6 family. Component of the ubiquinol-cytochrome c oxidoreductase (cytochrome b-c1 complex, complex III, CIII), a multisubunit enzyme composed of 11 subunits. The complex is composed of 3 respiratory subunits cytochrome b, cytochrome c1 and Rieske protein UQCRFS1, 2 core protein subunits UQCRC1/QCR1 and UQCRC2/QCR2, and 6 low-molecular weight protein subunits UQCRH/QCR6, UQCRB/QCR7, UQCRQ/QCR8, UQCR10/QCR9, UQCR11/QCR10 and subunit 9, the cleavage product of Rieske protein UQCRFS1. The complex exists as an obligatory dimer and forms supercomplexes (SCs) in the inner mitochondrial membrane with NADH-ubiquinone oxidoreductase (complex I, CI) and cytochrome c oxidase (complex IV, CIV), resulting in different assemblies (supercomplex SCI(1)III(2)IV(1) and megacomplex MCI(2)III(2)IV(2)).

It is found in the mitochondrion inner membrane. Component of the ubiquinol-cytochrome c oxidoreductase, a multisubunit transmembrane complex that is part of the mitochondrial electron transport chain which drives oxidative phosphorylation. The respiratory chain contains 3 multisubunit complexes succinate dehydrogenase (complex II, CII), ubiquinol-cytochrome c oxidoreductase (cytochrome b-c1 complex, complex III, CIII) and cytochrome c oxidase (complex IV, CIV), that cooperate to transfer electrons derived from NADH and succinate to molecular oxygen, creating an electrochemical gradient over the inner membrane that drives transmembrane transport and the ATP synthase. The cytochrome b-c1 complex catalyzes electron transfer from ubiquinol to cytochrome c, linking this redox reaction to translocation of protons across the mitochondrial inner membrane, with protons being carried across the membrane as hydrogens on the quinol. In the process called Q cycle, 2 protons are consumed from the matrix, 4 protons are released into the intermembrane space and 2 electrons are passed to cytochrome c. The sequence is that of Cytochrome b-c1 complex subunit 6, mitochondrial (UQCRH) from Homo sapiens (Human).